Reading from the N-terminus, the 162-residue chain is MSIILIGFMGAGKSTVAKLLTENFTDLDQLIEEEIEMTIAEFFELFGEADFRKIENEVFELALQKNIIIATGGGIIENPKNLEALDREAGVVFLTADFETLWERISMDLQNVRPLAQDKKAAQLLFEKRKNDYAKVADLTIDVTDKSPEQIVEEIREKWGIN.

10–15 (GAGKST) provides a ligand contact to ATP. Ser14 lines the Mg(2+) pocket. Residues Asp28, Arg52, and Gly73 each contribute to the substrate site. Residue Arg113 coordinates ATP. Arg129 provides a ligand contact to substrate.

The protein belongs to the shikimate kinase family. Monomer. Mg(2+) serves as cofactor.

The protein localises to the cytoplasm. The catalysed reaction is shikimate + ATP = 3-phosphoshikimate + ADP + H(+). Its pathway is metabolic intermediate biosynthesis; chorismate biosynthesis; chorismate from D-erythrose 4-phosphate and phosphoenolpyruvate: step 5/7. In terms of biological role, catalyzes the specific phosphorylation of the 3-hydroxyl group of shikimic acid using ATP as a cosubstrate. This chain is Shikimate kinase, found in Lactococcus lactis subsp. lactis (strain IL1403) (Streptococcus lactis).